The following is a 183-amino-acid chain: MKIYHYYFDTKEFYKEENYKPVKGLGLPAHSTIKKPLEPKEGYAVVFDERTQDWIYEEDHRGKRAWTFNKEEIFISDIGSPVGITFDEPGEFDIWTDDGWKEDETYKRVLIRNRKIEELYKEFQVLNNMIEASVANKKEKFYYKNLKRFFALLEKHEHLGGEFPSWPEKEQKPWYKRLFKHYV.

This sequence belongs to the tfa family.

In terms of biological role, chaperone involved, together with gp57, in the assembly of the distal-half tail fiber of T4. It is necessary for the maturation of protein gp37 to the dimeric structural subunit P37. In Escherichia coli (Bacteriophage T4), this protein is Tail fiber assembly protein (38).